The sequence spans 89 residues: UPF0147 protein YN1551_1489 (89 aa).

Belongs to the UPF0147 family.

This Saccharolobus islandicus (strain Y.N.15.51 / Yellowstone #2) (Sulfolobus islandicus) protein is UPF0147 protein YN1551_1489.